The following is a 164-amino-acid chain: Dehydrin Rab16C (164 aa).

Over residues 42–51 the composition is skewed to gly residues; that stretch reads MGGHHAGAGG. A disordered region spans residues 42–164; sequence MGGHHAGAGG…KIKEKLPGQH (123 aa). The span at 105–115 shows a compositional bias: low complexity; that stretch reads GNNQQQQQMMG. Over residues 128–138 the composition is skewed to gly residues; the sequence is GMTGAGTGTGV. A compositionally biased stretch (basic and acidic residues) spans 147 to 164; it reads GEKKGFMDKIKEKLPGQH.

Belongs to the plant dehydrin family.

This is Dehydrin Rab16C (RAB16C) from Oryza sativa subsp. japonica (Rice).